Consider the following 487-residue polypeptide: Cobyric acid synthase (487 aa).

The GATase cobBQ-type domain maps to 249–435 (GIDIAIVRLP…IHGIFDEGDF (187 aa)). Cys330 functions as the Nucleophile in the catalytic mechanism. Residue His427 is part of the active site.

Belongs to the CobB/CobQ family. CobQ subfamily.

It functions in the pathway cofactor biosynthesis; adenosylcobalamin biosynthesis. Functionally, catalyzes amidations at positions B, D, E, and G on adenosylcobyrinic A,C-diamide. NH(2) groups are provided by glutamine, and one molecule of ATP is hydrogenolyzed for each amidation. This chain is Cobyric acid synthase, found in Clostridium perfringens (strain SM101 / Type A).